A 37-amino-acid chain; its full sequence is Cytochrome b6-f complex subunit 5 (37 aa).

Residues 5–25 (LLSGIVLGLISITSAGLFVTA) form a helical membrane-spanning segment.

This sequence belongs to the PetG family. The 4 large subunits of the cytochrome b6-f complex are cytochrome b6, subunit IV (17 kDa polypeptide, PetD), cytochrome f and the Rieske protein, while the 4 small subunits are PetG, PetL, PetM and PetN. The complex functions as a dimer.

It is found in the plastid. It localises to the chloroplast thylakoid membrane. Component of the cytochrome b6-f complex, which mediates electron transfer between photosystem II (PSII) and photosystem I (PSI), cyclic electron flow around PSI, and state transitions. PetG is required for either the stability or assembly of the cytochrome b6-f complex. The protein is Cytochrome b6-f complex subunit 5 of Psilotum nudum (Whisk fern).